We begin with the raw amino-acid sequence, 422 residues long: Keratin, type I cytoskeletal 23 (422 aa).

The span at M1–R24 shows a compositional bias: polar residues. Residues M1 to H35 are disordered. A head region spans residues M1–N71. Residues G72–W107 form a coil 1A region. The IF rod domain maps to G72–T382. The segment at H108–N125 is linker 1. Positions I126–N217 are coil 1B. The segment at H218–V240 is linker 12. Residues L241 to D378 are coil 2. Residues T379 to I422 are rod-like helical tail.

The protein belongs to the intermediate filament family. In terms of assembly, heterotetramer of two type I and two type II keratins.

The chain is Keratin, type I cytoskeletal 23 (Krt23) from Mus musculus (Mouse).